Consider the following 459-residue polypeptide: Cysteine--tRNA ligase (459 aa).

Cys28 is a binding site for Zn(2+). The 'HIGH' region motif lies at 30–40 (VTVYDLCHIGH). Residues Cys209, His234, and Glu238 each contribute to the Zn(2+) site. The 'KMSKS' region motif lies at 266–270 (KMSKS). Lys269 is an ATP binding site.

This sequence belongs to the class-I aminoacyl-tRNA synthetase family. As to quaternary structure, monomer. The cofactor is Zn(2+).

The protein resides in the cytoplasm. The enzyme catalyses tRNA(Cys) + L-cysteine + ATP = L-cysteinyl-tRNA(Cys) + AMP + diphosphate. This is Cysteine--tRNA ligase (cysS) from Haemophilus influenzae (strain ATCC 51907 / DSM 11121 / KW20 / Rd).